The sequence spans 312 residues: tRNA dimethylallyltransferase (312 aa).

18–25 (GPTASGKS) is a binding site for ATP. Residue 20 to 25 (TASGKS) participates in substrate binding. Interaction with substrate tRNA regions lie at residues 43 to 46 (DSMQ) and 167 to 171 (QRILR).

This sequence belongs to the IPP transferase family. In terms of assembly, monomer. The cofactor is Mg(2+).

The catalysed reaction is adenosine(37) in tRNA + dimethylallyl diphosphate = N(6)-dimethylallyladenosine(37) in tRNA + diphosphate. Its function is as follows. Catalyzes the transfer of a dimethylallyl group onto the adenine at position 37 in tRNAs that read codons beginning with uridine, leading to the formation of N6-(dimethylallyl)adenosine (i(6)A). This is tRNA dimethylallyltransferase from Azorhizobium caulinodans (strain ATCC 43989 / DSM 5975 / JCM 20966 / LMG 6465 / NBRC 14845 / NCIMB 13405 / ORS 571).